The chain runs to 394 residues: Chorismate synthase (394 aa).

R62 provides a ligand contact to NADP(+). Residues 144–146 (RAS), G307, 322–326 (KPTPT), and R349 each bind FMN.

The protein belongs to the chorismate synthase family. Homotetramer. It depends on FMNH2 as a cofactor.

It carries out the reaction 5-O-(1-carboxyvinyl)-3-phosphoshikimate = chorismate + phosphate. It participates in metabolic intermediate biosynthesis; chorismate biosynthesis; chorismate from D-erythrose 4-phosphate and phosphoenolpyruvate: step 7/7. In terms of biological role, catalyzes the anti-1,4-elimination of the C-3 phosphate and the C-6 proR hydrogen from 5-enolpyruvylshikimate-3-phosphate (EPSP) to yield chorismate, which is the branch point compound that serves as the starting substrate for the three terminal pathways of aromatic amino acid biosynthesis. This reaction introduces a second double bond into the aromatic ring system. This Acetivibrio thermocellus (strain ATCC 27405 / DSM 1237 / JCM 9322 / NBRC 103400 / NCIMB 10682 / NRRL B-4536 / VPI 7372) (Clostridium thermocellum) protein is Chorismate synthase.